Reading from the N-terminus, the 382-residue chain is D-galactonate dehydratase (382 aa).

Residue Asp183 coordinates Mg(2+). The Proton donor role is filled by His185. 2 residues coordinate Mg(2+): Glu209 and Glu235. The Proton acceptor role is filled by His285.

Belongs to the mandelate racemase/muconate lactonizing enzyme family. GalD subfamily. It depends on Mg(2+) as a cofactor.

The enzyme catalyses D-galactonate = 2-dehydro-3-deoxy-D-galactonate + H2O. Its pathway is carbohydrate acid metabolism; D-galactonate degradation; D-glyceraldehyde 3-phosphate and pyruvate from D-galactonate: step 1/3. Catalyzes the dehydration of D-galactonate to 2-keto-3-deoxy-D-galactonate. This is D-galactonate dehydratase from Salmonella paratyphi A (strain AKU_12601).